Here is an 87-residue protein sequence, read N- to C-terminus: UPF0248 protein TSIB_1445 (87 aa).

Belongs to the UPF0248 family.

The chain is UPF0248 protein TSIB_1445 from Thermococcus sibiricus (strain DSM 12597 / MM 739).